The sequence spans 465 residues: Chromosomal replication initiator protein DnaA (465 aa).

Residues 1–87 (MLWTDCLTRL…RPGSILSSSE (87 aa)) are domain I, interacts with DnaA modulators. The disordered stretch occupies residues 81 to 123 (SILSSSEQPATTTAALQTAPIPQPAKGKREPEPVANTAVSSKS). A compositionally biased stretch (low complexity) spans 88–100 (QPATTTAALQTAP). Residues 88-127 (QPATTTAALQTAPIPQPAKGKREPEPVANTAVSSKSSKKK) are domain II. Positions 128-345 (LLNPQFTFSL…GALNKVVAIS (218 aa)) are domain III, AAA+ region. The ATP site is built by Gly-173, Gly-175, Lys-176, and Thr-177. Residues 346–465 (RFKGAPIDLD…YKNLLRLLQS (120 aa)) are domain IV, binds dsDNA.

It belongs to the DnaA family. Oligomerizes as a right-handed, spiral filament on DNA at oriC.

The protein localises to the cytoplasm. In terms of biological role, plays an essential role in the initiation and regulation of chromosomal replication. ATP-DnaA binds to the origin of replication (oriC) to initiate formation of the DNA replication initiation complex once per cell cycle. Binds the DnaA box (a 9 base pair repeat at the origin) and separates the double-stranded (ds)DNA. Forms a right-handed helical filament on oriC DNA; dsDNA binds to the exterior of the filament while single-stranded (ss)DNA is stabiized in the filament's interior. The ATP-DnaA-oriC complex binds and stabilizes one strand of the AT-rich DNA unwinding element (DUE), permitting loading of DNA polymerase. After initiation quickly degrades to an ADP-DnaA complex that is not apt for DNA replication. Binds acidic phospholipids. The sequence is that of Chromosomal replication initiator protein DnaA from Acinetobacter baumannii (strain SDF).